Here is a 173-residue protein sequence, read N- to C-terminus: Alpha-crystallin A chain (173 aa).

Position 1 is an N-acetylmethionine (Met1). The interval 1-63 (MDIAIQHPWF…RTVLDSGISE (63 aa)) is required for complex formation with BFSP1 and BFSP2. Gln6 bears the Deamidated glutamine; partial mark. Position 45 is a phosphoserine (Ser45). Gln50 bears the Deamidated glutamine; partial mark. Residues 52–162 (LFRTVLDSGI…GHSERAIPVS (111 aa)) enclose the sHSP domain. Lys70 and Lys99 each carry N6-acetyllysine. His100 contributes to the Zn(2+) binding site. Asn101 is modified (deamidated asparagine; partial). Zn(2+) contacts are provided by Glu102 and His107. The residue at position 122 (Ser122) is a Phosphoserine. At Asn123 the chain carries Deamidated asparagine; partial. The segment at 144 to 173 (PKVPSGMDAGHSERAIPVSREEKPSSAPSS) is disordered. Residues 153 to 167 (GHSERAIPVSREEKP) show a composition bias toward basic and acidic residues. Residue His154 participates in Zn(2+) binding. O-linked (GlcNAc) serine glycosylation is present at Ser162.

It belongs to the small heat shock protein (HSP20) family. As to quaternary structure, heteromer composed of three CRYAA and one CRYAB subunits. Inter-subunit bridging via zinc ions enhances stability, which is crucial as there is no protein turn over in the lens. Can also form homodimers and homotetramers (dimers of dimers) which serve as the building blocks of homooligomers. Within homooligomers, the zinc-binding motif is created from residues of 3 different molecules. His-100 and Glu-102 from one molecule are ligands of the zinc ion, and His-107 and His-154 residues from additional molecules complete the site with tetrahedral coordination geometry. Part of a complex required for lens intermediate filament formation composed of BFSP1, BFSP2 and CRYAA. Post-translationally, acetylation at Lys-70 may increase chaperone activity. Undergoes age-dependent proteolytical cleavage at the C-terminus.

The protein localises to the cytoplasm. The protein resides in the nucleus. Functionally, contributes to the transparency and refractive index of the lens. Acts as a chaperone, preventing aggregation of various proteins under a wide range of stress conditions. Required for the correct formation of lens intermediate filaments as part of a complex composed of BFSP1, BFSP2 and CRYAA. In Melursus ursinus (Sloth bear), this protein is Alpha-crystallin A chain (CRYAA).